The following is a 633-amino-acid chain: DNA mismatch repair protein MutL (633 aa).

This sequence belongs to the DNA mismatch repair MutL/HexB family.

Its function is as follows. This protein is involved in the repair of mismatches in DNA. It is required for dam-dependent methyl-directed DNA mismatch repair. May act as a 'molecular matchmaker', a protein that promotes the formation of a stable complex between two or more DNA-binding proteins in an ATP-dependent manner without itself being part of a final effector complex. This Macrococcus caseolyticus (strain JCSC5402) (Macrococcoides caseolyticum) protein is DNA mismatch repair protein MutL.